A 338-amino-acid chain; its full sequence is Ketol-acid reductoisomerase (NADP(+)) (338 aa).

A KARI N-terminal Rossmann domain is found at 1-181 (MKVYYDKDAD…GGTKGGVIET (181 aa)). Residues 24–27 (YGSQ), Arg-47, Ser-52, and 82–85 (DETQ) each bind NADP(+). The active site involves His-107. An NADP(+)-binding site is contributed by Gly-133. The 146-residue stretch at 182–327 (SFREETETDL…AELRAMMPWI (146 aa)) folds into the KARI C-terminal knotted domain. Residues Asp-190, Glu-194, Glu-226, and Glu-230 each contribute to the Mg(2+) site. A substrate-binding site is contributed by Ser-251.

The protein belongs to the ketol-acid reductoisomerase family. Requires Mg(2+) as cofactor.

It carries out the reaction (2R)-2,3-dihydroxy-3-methylbutanoate + NADP(+) = (2S)-2-acetolactate + NADPH + H(+). It catalyses the reaction (2R,3R)-2,3-dihydroxy-3-methylpentanoate + NADP(+) = (S)-2-ethyl-2-hydroxy-3-oxobutanoate + NADPH + H(+). It participates in amino-acid biosynthesis; L-isoleucine biosynthesis; L-isoleucine from 2-oxobutanoate: step 2/4. The protein operates within amino-acid biosynthesis; L-valine biosynthesis; L-valine from pyruvate: step 2/4. In terms of biological role, involved in the biosynthesis of branched-chain amino acids (BCAA). Catalyzes an alkyl-migration followed by a ketol-acid reduction of (S)-2-acetolactate (S2AL) to yield (R)-2,3-dihydroxy-isovalerate. In the isomerase reaction, S2AL is rearranged via a Mg-dependent methyl migration to produce 3-hydroxy-3-methyl-2-ketobutyrate (HMKB). In the reductase reaction, this 2-ketoacid undergoes a metal-dependent reduction by NADPH to yield (R)-2,3-dihydroxy-isovalerate. The chain is Ketol-acid reductoisomerase (NADP(+)) from Laribacter hongkongensis (strain HLHK9).